The primary structure comprises 204 residues: Twist-related protein 1 (204 aa).

Positions 1–18 (MMQDVSSSPVSPADDSLS) are enriched in low complexity. A disordered region spans residues 1–107 (MMQDVSSSPV…GGGSPQSYEE (107 aa)). Over residues 34–43 (RGGRKRRSSR) the composition is skewed to basic residues. Gly residues-rich tracts occupy residues 46 to 65 (AGGGAGPGGAAGGGVGGGDE) and 80 to 101 (GCGGGGSAGGGGGGGSSSGGGS). The bHLH domain maps to 110 to 161 (TQRVMANVRERQRTQSLNEAFAALRKIIPTLPSDKLSKIQTLKLAARYIDFL). Residues 163–193 (QVLQSDELDSKMASCSYVAHERFSYAFSVWR) form a sufficient for transactivation activity region.

Efficient DNA binding requires dimerization with another bHLH protein. Homodimer or heterodimer with E proteins such as TCF3. ID1 binds preferentially to TCF3 but does not interact efficiently with TWIST1 so ID1 levels control the amount of TCF3 available to dimerize with TWIST and thus determine the type of dimer formed.

Its subcellular location is the nucleus. In terms of biological role, acts as a transcriptional regulator. Inhibits myogenesis by sequestrating E proteins, inhibiting trans-activation by MEF2, and inhibiting DNA-binding by MYOD1 through physical interaction. This interaction probably involves the basic domains of both proteins. Also represses expression of pro-inflammatory cytokines such as TNFA and IL1B. Regulates cranial suture patterning and fusion. Activates transcription as a heterodimer with E proteins. Regulates gene expression differentially, depending on dimer composition. Homodimers induce expression of FGFR2 and POSTN while heterodimers repress FGFR2 and POSTN expression and induce THBS1 expression. Heterodimerization is also required for osteoblast differentiation. Represses the activity of the circadian transcriptional activator: NPAS2-BMAL1 heterodimer. The polypeptide is Twist-related protein 1 (TWIST1) (Nomascus concolor (Black crested gibbon)).